The primary structure comprises 480 residues: Ammonium transporter 2 member 4 (480 aa).

Residues 1 to 27 (MELPSNLLPDEASPEWMNKGDNAWQLT) are Extracellular-facing. A helical transmembrane segment spans residues 28-48 (AATMVGLQSIPGLVILYGSLV). Over 49-51 (KKT) the chain is Cytoplasmic. Residues 52–72 (WAINSAFMAFYAFASVLLCWV) form a helical membrane-spanning segment. Residues 73–113 (SWAYQMSFGEKMVFFLGKPNVALDEKFLLGKAFLGNFPNAT) lie on the Extracellular side of the membrane. An N-linked (GlcNAc...) asparagine glycan is attached at Asn111. A helical transmembrane segment spans residues 114 to 134 (MVFYQGVFAGLTLILIAGALL). Residues 135-141 (GRMNIRA) are Cytoplasmic-facing. Residues 142 to 162 (WMLFVPLWVTFSYTVVAFSIW) form a helical membrane-spanning segment. The Extracellular segment spans residues 163–175 (CPDGWLAKRGVID). Residues 176-196 (FAGGYVIHLSAGVAGFTAAYW) form a helical membrane-spanning segment. The Cytoplasmic portion of the chain corresponds to 197–214 (VGPRADKDRETFPAATNN). Residues 215–235 (MIMVLAGAGLLWMGWSGFNGG) traverse the membrane as a helical segment. Residues 236-242 (APFVAST) lie on the Extracellular side of the membrane. Residues 243–263 (IASLAILNTHVCTAASITVWV) traverse the membrane as a helical segment. The Cytoplasmic portion of the chain corresponds to 264–274 (MLDTFYFGKPT). The chain crosses the membrane as a helical span at residues 275–295 (VFGAVQGMITGLVCITPAAGV). The Extracellular portion of the chain corresponds to 296–298 (VQG). Residues 299-319 (WAAILMGFISGSIPWYTMMVL) traverse the membrane as a helical segment. Topologically, residues 320-334 (HNKVNFLKKIDDPMA) are cytoplasmic. Residues 335–355 (VFHTHAIAGALGGILTGFFAV) form a helical membrane-spanning segment. Topologically, residues 356 to 394 (PKLCRLFYMVPDWEKYIGLAYGLQNKGATQAGLKQMVIQ) are extracellular. Residues 395–415 (IEAIVFVICYNVLMTSLICLI) traverse the membrane as a helical segment. Topologically, residues 416–480 (VRVIVPLRLN…SRSLGELQMV (65 aa)) are cytoplasmic.

Belongs to the ammonia transporter channel (TC 1.A.11.2) family.

It is found in the cell membrane. Involved in ammonium transport. May be involved in arbuscular mycorrhizal (AM) symbiosis with AM fungi. The chain is Ammonium transporter 2 member 4 from Medicago truncatula (Barrel medic).